The sequence spans 521 residues: GMP synthase [glutamine-hydrolyzing] (521 aa).

The Glutamine amidotransferase type-1 domain occupies 5-197 (KILILDFGSQ…VLDICGAQPS (193 aa)). Cysteine 81 serves as the catalytic Nucleophile. Residues histidine 171 and glutamate 173 contribute to the active site. The region spanning 198-390 (WTMPNYIEEA…LGLPREMVYR (193 aa)) is the GMPS ATP-PPase domain. 225–231 (SGGVDSS) is an ATP binding site.

As to quaternary structure, homodimer.

The enzyme catalyses XMP + L-glutamine + ATP + H2O = GMP + L-glutamate + AMP + diphosphate + 2 H(+). Its pathway is purine metabolism; GMP biosynthesis; GMP from XMP (L-Gln route): step 1/1. In terms of biological role, catalyzes the synthesis of GMP from XMP. This chain is GMP synthase [glutamine-hydrolyzing], found in Neisseria meningitidis serogroup C / serotype 2a (strain ATCC 700532 / DSM 15464 / FAM18).